The following is a 681-amino-acid chain: MPLTESAWNESVGWFSSDHKYSTSSNKMRGEEASGTVLHRLIQEQLRYGNPTDAHTLLAIQQQALRRGGGAASSSQSSSESLSQDEPHSPQLSTRQEPQGQEHQVDYQHSENYTTYPHHQEELPTYEQAKAHSQYLASQWCLPHRVCSLQDSVAIQKPCEEQDSWDMKQGHVRSISDRLLHFSMESGKMPCSASYPQINGYHANQHLQYNQQGLEYNKLAPYTEYPFSVEYENGYKAPPPFHSQHNRLPTPEVCHRLSTSPPAGREVNACSRSQLEMLMNENKRLRQELEGQTEKALKIQKLEQEIQRISEAYDTLMKGCAKREALEQALRNKLMAEIKRLQHSSVQAAKQAEAADQNQHAIEKLHLQNEEQKLRCACLEQEVQHLRNEAEKHQRRSEALESTLRSTQTRSQQLWTELQRKRAYVEKVERLQGALTQLQATCEKREGLEMRLRTRLEQELRSLRNQQRQPQPVGGTSHVSVYTLQENLREKEERILSLEADKIRWEQKYLEEKTMREFAMDAAATAAAQRDTTIINHSPCHSFIEELPSTEYRNQEVENRIRSLYAQILEKDTVISILKQKLQHEQKGQLGALQPATADSSIISSHSTPAHTAQGKERSHFNDQAAGTLHSSHAPVEALAHTTDQTPHTEAKPKNIQKAPSAVDLFKGVDDVSAEAVEIFI.

Over residues 68-84 (GGGAASSSQSSSESLSQ) the composition is skewed to low complexity. The interval 68 to 106 (GGGAASSSQSSSESLSQDEPHSPQLSTRQEPQGQEHQVD) is disordered. The span at 90–102 (PQLSTRQEPQGQE) shows a compositional bias: polar residues. Tyr126 is modified (phosphotyrosine; by FGFR1). Coiled-coil stretches lie at residues 268–319 (NACS…LMKG), 362–441 (IEKL…LQAT), and 481–508 (VYTLQENLREKEERILSLEADKIRWEQK). The segment at 589 to 618 (QLGALQPATADSSIISSHSTPAHTAQGKER) is disordered. The segment covering 597–611 (TADSSIISSHSTPAH) has biased composition (polar residues). The PDZ-binding signature appears at 678-681 (EIFI).

This sequence belongs to the angiomotin family. Interacts with SRC. In terms of processing, phosphorylation at Tyr-126 is necessary for efficient binding to SRC and synergistically functioning with SRC to activate the downstream MAPK pathway. Expressed in endothelial cells.

Its subcellular location is the recycling endosome. The protein resides in the cytoplasm. It is found in the cell projection. The protein localises to the podosome. It localises to the cell junction. In terms of biological role, required for proper architecture of actin filaments and for cell movements during embryogenesis. Plays a role in the radial actin fiber architecture in skin epithelial cells, thereby maintains cell geometry, size and cell interconnectivity within the skin. Plays an important role in coupling actin fibers to cell junctions in endothelial cells and is therefore required for correct endothelial cell morphology and maintenance of dorsal aorta lumen expansion during embryogenesis. May further play a role in the polarity, proliferation and migration of endothelial cells, and therefore participates in angiogenesis. May regulate the translocation of phosphorylated SRC to peripheral cell-matrix adhesion sites. This is Angiomotin-like 2b from Danio rerio (Zebrafish).